A 952-amino-acid chain; its full sequence is Plasma membrane ATPase 4 (952 aa).

At 1-64 (MAKAISLEEI…EKNESKILKF (64 aa)) the chain is on the cytoplasmic side. The helical transmembrane segment at 65–84 (LGFMWNPLSWVMEAAAVMAI) threads the bilayer. The Extracellular segment spans residues 85-96 (ALANGDGKPPDW). The chain crosses the membrane as a helical span at residues 97 to 117 (QDFIGIICLLVINSTISFIEE). Residues 118–246 (NNAGNAAAAL…GHFQKVLTAI (129 aa)) lie on the Cytoplasmic side of the membrane. The helical transmembrane segment at 247-267 (GNFCICSIAIGMLVEIIVMYP) threads the bilayer. At 268-277 (IQHRKYRDGI) the chain is on the extracellular side. A helical membrane pass occupies residues 278–299 (DNLLVLLIGGIPIAMPTVLSVT). The Cytoplasmic segment spans residues 300-646 (MAIGSHRLSQ…TSRAIFQRMK (347 aa)). D332 functions as the 4-aspartylphosphate intermediate in the catalytic mechanism. D591 and D595 together coordinate Mg(2+). A helical transmembrane segment spans residues 647-668 (NYTIYAVSITIRIVFGFMFIAL). The Extracellular portion of the chain corresponds to 669–673 (IWKYD). A helical transmembrane segment spans residues 674–696 (FSAFMVLIIAILNDGTIMTISKD). At 697-712 (RVKPSPMPDSWKLKEI) the chain is on the cytoplasmic side. The chain crosses the membrane as a helical span at residues 713–733 (FATGVVLGGYQALMTVVFFWA). The Extracellular segment spans residues 734–754 (MHDTDFFSDKFGVKSLRNSDE). The chain crosses the membrane as a helical span at residues 755–775 (EMMSALYLQVSIISQALIFVT). At 776–787 (RSRSWSFLERPG) the chain is on the cytoplasmic side. The chain crosses the membrane as a helical span at residues 788–808 (MLLVIAFMIAQLVATLIAVYA). The Extracellular segment spans residues 809-817 (NWAFARVKG). The helical transmembrane segment at 818 to 838 (CGWGWAGVIWLYSIIFYLPLD) threads the bilayer. Residues 839–952 (IMKFAIRYIL…IETIQQHYTV (114 aa)) are Cytoplasmic-facing.

The protein belongs to the cation transport ATPase (P-type) (TC 3.A.3) family. Type IIIA subfamily. Expressed at high levels in root, stem, leaf and flower.

Its subcellular location is the cell membrane. The catalysed reaction is ATP + H2O + H(+)(in) = ADP + phosphate + 2 H(+)(out). Its function is as follows. The plasma membrane ATPase of plants and fungi is a hydrogen ion pump. The proton gradient it generates drives the active transport of nutrients by H(+)-symport. The resulting external acidification and/or internal alkinization may mediate growth responses. In Nicotiana plumbaginifolia (Leadwort-leaved tobacco), this protein is Plasma membrane ATPase 4 (PMA4).